A 326-amino-acid polypeptide reads, in one-letter code: Adenosine receptor A1 (326 aa).

The Extracellular segment spans residues 1–10; sequence MPPSISAFQA. The chain crosses the membrane as a helical span at residues 11–33; the sequence is AYIGIEVLIALVSVPGNVLVIWA. Residues 34–46 lie on the Cytoplasmic side of the membrane; the sequence is VKVNQALRDATFC. A helical transmembrane segment spans residues 47 to 69; it reads FIVSLAVADVAVGALVIPLAILI. At 70 to 80 the chain is on the extracellular side; sequence NIGPQTYFHTC. Cysteine 80 and cysteine 169 form a disulfide bridge. Residues 81-102 traverse the membrane as a helical segment; sequence LMVACPVLILTQSSILALLAIA. At 103–123 the chain is on the cytoplasmic side; it reads VDRYLRVKIPLRYKMVVTPRR. A helical transmembrane segment spans residues 124–146; that stretch reads AAVAIAGCWILSFVVGLTPMFGW. At 147-176 the chain is on the extracellular side; that stretch reads NNLSAVERAWAANGSMGEPVIKCEFEKVIS. Asparagine 159 is a glycosylation site (N-linked (GlcNAc...) asparagine). The chain crosses the membrane as a helical span at residues 177–201; that stretch reads MEYMVYFNFFVWVLPPLLLMVLIYL. Topologically, residues 202–235 are cytoplasmic; it reads EVFYLIRKQLNKKVSASSGDPQKYYGKELKIAKS. Residues 236–259 form a helical membrane-spanning segment; the sequence is LALILFLFALSWLPLHILNCITLF. The Extracellular portion of the chain corresponds to 260 to 267; the sequence is CPSCHKPS. Residues 268–292 traverse the membrane as a helical segment; that stretch reads ILTYIAIFLTHGNSAMNPIVYAFRI. The Cytoplasmic portion of the chain corresponds to 293-326; sequence QKFRVTFLKIWNDHFRCQPAPPIDEDLPEERPDD. Cysteine 309 carries S-palmitoyl cysteine lipidation.

It belongs to the G-protein coupled receptor 1 family.

It localises to the cell membrane. Functionally, receptor for adenosine. The activity of this receptor is mediated by G proteins which inhibit adenylyl cyclase. The chain is Adenosine receptor A1 (ADORA1) from Homo sapiens (Human).